A 233-amino-acid chain; its full sequence is Putative N-acetylmannosamine-6-phosphate 2-epimerase (233 aa).

The protein belongs to the NanE family.

The enzyme catalyses an N-acyl-D-glucosamine 6-phosphate = an N-acyl-D-mannosamine 6-phosphate. It functions in the pathway amino-sugar metabolism; N-acetylneuraminate degradation; D-fructose 6-phosphate from N-acetylneuraminate: step 3/5. Functionally, converts N-acetylmannosamine-6-phosphate (ManNAc-6-P) to N-acetylglucosamine-6-phosphate (GlcNAc-6-P). The chain is Putative N-acetylmannosamine-6-phosphate 2-epimerase from Yersinia pestis bv. Antiqua (strain Antiqua).